The primary structure comprises 266 residues: Undecaprenyl-diphosphatase (266 aa).

Transmembrane regions (helical) follow at residues 38-58, 80-100, 108-128, 136-156, 176-196, 217-237, and 245-265; these read SDMF…IIYW, LIVA…VLHF, PIAW…WAAA, ITWL…IFPG, AAAT…ASGY, IAFV…LAYI, and FAVY…TGLI.

This sequence belongs to the UppP family.

Its subcellular location is the cell inner membrane. It catalyses the reaction di-trans,octa-cis-undecaprenyl diphosphate + H2O = di-trans,octa-cis-undecaprenyl phosphate + phosphate + H(+). In terms of biological role, catalyzes the dephosphorylation of undecaprenyl diphosphate (UPP). Confers resistance to bacitracin. The chain is Undecaprenyl-diphosphatase from Rhizobium leguminosarum bv. trifolii (strain WSM2304).